The primary structure comprises 231 residues: NADH-ubiquinone oxidoreductase chain 4 (231 aa).

The next 6 membrane-spanning stretches (helical) occupy residues 1 to 21, 34 to 54, 63 to 85, 89 to 111, 128 to 148, and 169 to 189; these read PIAG…YGII, MFLP…LTCL, IAYS…TPWG, AMAL…NTTY, ILPM…AIPP, and TIIM…HMFL.

The protein belongs to the complex I subunit 4 family.

It localises to the mitochondrion membrane. It carries out the reaction a ubiquinone + NADH + 5 H(+)(in) = a ubiquinol + NAD(+) + 4 H(+)(out). Core subunit of the mitochondrial membrane respiratory chain NADH dehydrogenase (Complex I) that is believed to belong to the minimal assembly required for catalysis. Complex I functions in the transfer of electrons from NADH to the respiratory chain. The immediate electron acceptor for the enzyme is believed to be ubiquinone. The chain is NADH-ubiquinone oxidoreductase chain 4 (MT-ND4) from Deinagkistrodon acutus (Hundred-pace snake).